The following is a 160-amino-acid chain: Nucleotide-binding protein VF_1240 (160 aa).

It belongs to the YajQ family.

Functionally, nucleotide-binding protein. The chain is Nucleotide-binding protein VF_1240 from Aliivibrio fischeri (strain ATCC 700601 / ES114) (Vibrio fischeri).